Consider the following 115-residue polypeptide: Non-specific lipid-transfer protein 4.2 (115 aa).

The N-terminal stretch at 1–25 is a signal peptide; it reads MARAAATQLVLVAMVAAMLIVATDA. Cystine bridges form between cysteine 29-cysteine 77, cysteine 39-cysteine 54, cysteine 55-cysteine 97, and cysteine 75-cysteine 111.

The protein belongs to the plant LTP family.

Plant non-specific lipid-transfer proteins transfer phospholipids as well as galactolipids across membranes. May play a role in wax or cutin deposition in the cell walls of expanding epidermal cells and certain secretory tissues. This Hordeum vulgare (Barley) protein is Non-specific lipid-transfer protein 4.2 (LTP4.2).